We begin with the raw amino-acid sequence, 310 residues long: ADP-L-glycero-D-manno-heptose-6-epimerase (310 aa).

NADP(+) contacts are provided by residues 10-11 (FI), 31-32 (DN), Lys38, Lys53, 75-79 (EGACS), and Asn92. Tyr140 acts as the Proton acceptor in catalysis. Lys144 lines the NADP(+) pocket. A substrate-binding site is contributed by Asn169. 2 residues coordinate NADP(+): Val170 and Lys178. The active-site Proton acceptor is Lys178. Residues Ser180, His187, 201 to 204 (FEGS), Arg209, and Tyr272 each bind substrate.

It belongs to the NAD(P)-dependent epimerase/dehydratase family. HldD subfamily. As to quaternary structure, homopentamer. Requires NADP(+) as cofactor.

It catalyses the reaction ADP-D-glycero-beta-D-manno-heptose = ADP-L-glycero-beta-D-manno-heptose. The protein operates within nucleotide-sugar biosynthesis; ADP-L-glycero-beta-D-manno-heptose biosynthesis; ADP-L-glycero-beta-D-manno-heptose from D-glycero-beta-D-manno-heptose 7-phosphate: step 4/4. Catalyzes the interconversion between ADP-D-glycero-beta-D-manno-heptose and ADP-L-glycero-beta-D-manno-heptose via an epimerization at carbon 6 of the heptose. The sequence is that of ADP-L-glycero-D-manno-heptose-6-epimerase from Klebsiella pneumoniae subsp. pneumoniae (strain ATCC 700721 / MGH 78578).